Consider the following 697-residue polypeptide: Exocyst complex component 7 (697 aa).

The SEC8 and ARHQ binding stretch occupies residues 1–384; that stretch reads MIPPQEASAR…FSTVLTVFPI (384 aa). Coiled coils occupy residues 5 to 42 and 63 to 85; these read QEAS…TRNM and VHKQ…SCLD. Position 133 is a phosphoserine (serine 133). The disordered stretch occupies residues 238–270; the sequence is FRKSSSSSGVPYSPAIPNKRKDTPTKKPIKRPG.

Belongs to the EXO70 family. As to quaternary structure, the exocyst complex is composed of EXOC1, EXOC2, EXOC3, EXOC4, EXOC5, EXOC6, EXOC7 and EXOC8. Interacts with RAB11FIP3. Interacts with ARHQ in a GTP-dependent manner.

The protein localises to the cytoplasm. It localises to the cytosol. Its subcellular location is the cell membrane. It is found in the midbody. The protein resides in the midbody ring. Its function is as follows. Component of the exocyst complex involved in the docking of exocytic vesicles with fusion sites on the plasma membrane. In adipocytes, plays a crucial role in targeting SLC2A4 vesicle to the plasma membrane in response to insulin, perhaps directing the vesicle to the precise site of fusion. It is required for neuron survival and plays an essential role in cortical development. The protein is Exocyst complex component 7 (Exoc7) of Mus musculus (Mouse).